The sequence spans 234 residues: Cyclin-J18 (234 aa).

Belongs to the cyclin family.

This is Cyclin-J18 (CYCJ18) from Arabidopsis thaliana (Mouse-ear cress).